The following is a 137-amino-acid chain: uncharacterized protein (137 aa).

4 helical membrane-spanning segments follow: residues 20–39, 44–61, 86–105, and 109–131; these read YGKI…GYAV, WFIT…LSLV, VEIF…ALDL, and AALA…YGYY.

It localises to the cell membrane. This is an uncharacterized protein from Archaeoglobus fulgidus (strain ATCC 49558 / DSM 4304 / JCM 9628 / NBRC 100126 / VC-16).